A 147-amino-acid polypeptide reads, in one-letter code: Arginine repressor (147 aa).

This sequence belongs to the ArgR family.

The protein localises to the cytoplasm. Its pathway is amino-acid biosynthesis; L-arginine biosynthesis [regulation]. In terms of biological role, regulates arginine biosynthesis genes. This Chlamydia caviae (strain ATCC VR-813 / DSM 19441 / 03DC25 / GPIC) (Chlamydophila caviae) protein is Arginine repressor.